A 106-amino-acid chain; its full sequence is MTGTGKTVTRVDLCEAVYKKVGLSRTESSAFVELVLKEITDCLEKGETVKLSSFGSFMVRKKGQRIGRNPKTGTEVPISPRRVMVFKPSAILKQRINSNGAGGKTD.

This sequence belongs to the bacterial histone-like protein family. In terms of assembly, heterodimer of an alpha and a beta chain.

In terms of biological role, this protein is one of the two subunits of integration host factor, a specific DNA-binding protein that functions in genetic recombination as well as in transcriptional and translational control. This chain is Integration host factor subunit alpha, found in Nitrobacter winogradskyi (strain ATCC 25391 / DSM 10237 / CIP 104748 / NCIMB 11846 / Nb-255).